Consider the following 494-residue polypeptide: MGLRVYNTLSGNKEEFVPVEPGKVKMYVCGVTVYDHCHIGHARANVVFDVIYRYFCHLGLDVTYVRNYTDIDDKIINRANREGVTYDLISERFIKEFDRDMERLGLKLPTCQPKATEHIDEIISLVQTLIDKDFAYQAGGDVNFCVEKFDSYLKLSGRTLEDMQAGARIEVDERKRHPMDFALWKEAKPGEPFWESPWGKGRPGWHIECSAMSMKYLGTTFDIHGGGKDLIFPHHENEIAQSEAATGKPFVNYWLHNGFVNINSEKMSKSLGNFFTIKEVLDRYDNEVLRFFLLSAHYRSPIDFSDQNLTEAEAGLERIYKALAAVEETLAAGNGCTGAPVDASSLNEAEGELFDKTTSISARFGEAMDDDFNTALAMAHVFDLVRCVNRVLSETAGASDNICSLCTLIKAEVAKIAGVLGIFSSKPASFLERLKSRKAGNLDIAVDEIERLIAERTAARKAKDFKRSDEIRDQLAAKNIVLLDSQQGTTWSVK.

Zn(2+) is bound at residue cysteine 29. Positions 31–41 (VTVYDHCHIGH) match the 'HIGH' region motif. Residues cysteine 209, histidine 234, and glutamate 238 each coordinate Zn(2+). A 'KMSKS' region motif is present at residues 266–270 (KMSKS). Lysine 269 serves as a coordination point for ATP.

This sequence belongs to the class-I aminoacyl-tRNA synthetase family. In terms of assembly, monomer. The cofactor is Zn(2+).

It localises to the cytoplasm. It carries out the reaction tRNA(Cys) + L-cysteine + ATP = L-cysteinyl-tRNA(Cys) + AMP + diphosphate. In Geotalea daltonii (strain DSM 22248 / JCM 15807 / FRC-32) (Geobacter daltonii), this protein is Cysteine--tRNA ligase.